We begin with the raw amino-acid sequence, 753 residues long: 5-methyltetrahydropteroyltriglutamate--homocysteine methyltransferase (753 aa).

Residues 17 to 20 and Lys117 contribute to the 5-methyltetrahydropteroyltri-L-glutamate site; that span reads RELK. L-homocysteine contacts are provided by residues 431–433 and Glu484; that span reads IGS. Residues 431 to 433 and Glu484 each bind L-methionine; that span reads IGS. Residues 515 to 516 and Trp561 contribute to the 5-methyltetrahydropteroyltri-L-glutamate site; that span reads RC. Residue Asp599 participates in L-homocysteine binding. Residue Asp599 coordinates L-methionine. Glu605 is a 5-methyltetrahydropteroyltri-L-glutamate binding site. Zn(2+) contacts are provided by His641, Cys643, and Glu665. The active-site Proton donor is the His694. Position 726 (Cys726) interacts with Zn(2+).

This sequence belongs to the vitamin-B12 independent methionine synthase family. Zn(2+) is required as a cofactor.

It carries out the reaction 5-methyltetrahydropteroyltri-L-glutamate + L-homocysteine = tetrahydropteroyltri-L-glutamate + L-methionine. It participates in amino-acid biosynthesis; L-methionine biosynthesis via de novo pathway; L-methionine from L-homocysteine (MetE route): step 1/1. Functionally, catalyzes the transfer of a methyl group from 5-methyltetrahydrofolate to homocysteine resulting in methionine formation. This Klebsiella pneumoniae (strain 342) protein is 5-methyltetrahydropteroyltriglutamate--homocysteine methyltransferase.